A 250-amino-acid polypeptide reads, in one-letter code: Ubiquinone/menaquinone biosynthesis C-methyltransferase UbiE (250 aa).

S-adenosyl-L-methionine contacts are provided by residues S73, D94, and 122-123 (NA).

This sequence belongs to the class I-like SAM-binding methyltransferase superfamily. MenG/UbiE family.

It catalyses the reaction a 2-demethylmenaquinol + S-adenosyl-L-methionine = a menaquinol + S-adenosyl-L-homocysteine + H(+). The enzyme catalyses a 2-methoxy-6-(all-trans-polyprenyl)benzene-1,4-diol + S-adenosyl-L-methionine = a 5-methoxy-2-methyl-3-(all-trans-polyprenyl)benzene-1,4-diol + S-adenosyl-L-homocysteine + H(+). It functions in the pathway quinol/quinone metabolism; menaquinone biosynthesis; menaquinol from 1,4-dihydroxy-2-naphthoate: step 2/2. It participates in cofactor biosynthesis; ubiquinone biosynthesis. Functionally, methyltransferase required for the conversion of demethylmenaquinol (DMKH2) to menaquinol (MKH2) and the conversion of 2-polyprenyl-6-methoxy-1,4-benzoquinol (DDMQH2) to 2-polyprenyl-3-methyl-6-methoxy-1,4-benzoquinol (DMQH2). The sequence is that of Ubiquinone/menaquinone biosynthesis C-methyltransferase UbiE from Legionella pneumophila subsp. pneumophila (strain Philadelphia 1 / ATCC 33152 / DSM 7513).